The chain runs to 376 residues: Growth/differentiation factor 8 (376 aa).

The signal sequence occupies residues 1–22; it reads MHLSQIVLYLSLLIALGPVVLS. Positions 23–267 are excised as a propeptide; that stretch reads DQEAHQQPSV…ISEGPRRARR (245 aa). Intrachain disulfides connect Cys273-Cys283, Cys282-Cys341, Cys310-Cys373, and Cys314-Cys375.

The protein belongs to the TGF-beta family. Homodimer; disulfide-linked. In terms of tissue distribution, highly expressed in muscle. Also expressed in other tissues such as eye, gill, ovary, gut and brain. Very low level detected in testis. Not expressed in liver, kidney, stomach or heart.

It localises to the secreted. Acts specifically as a negative regulator of skeletal muscle growth. The protein is Growth/differentiation factor 8 of Oreochromis mossambicus (Mozambique tilapia).